A 290-amino-acid chain; its full sequence is MKVCIISILGRPNVGKSSLLNKIIKYDLAIVSNVPQTTRDQIMGVYTEDGYQFVFVDTPGIHKPLNLLGESLNKEAFSSLKDIDCVLFLSPVNEDIKSGDKLILERITNAKNKIAVISKIDLAKSPDEIAKKIDGLKEYGFNKIISVSNKNDKSVDSLIEILKEYAYNAPPFYDEDYITDKSMRFMAKEYIRESAINLLTDELPHSIAVEVQDFIEEDDRITINAIIYVKKDSQKGILIGKGASMIKKIGTNARMKMSHQFDTKVTLNLKVKVSNKWINDKSALKKFGYN.

One can recognise an Era-type G domain in the interval lysine 2–asparagine 168. The interval glycine 10–serine 17 is G1. Position 10–17 (glycine 10–serine 17) interacts with GTP. The tract at residues glutamine 36–aspartate 40 is G2. Positions aspartate 57–glycine 60 are G3. GTP is bound by residues aspartate 57 to isoleucine 61 and serine 118 to aspartate 121. Residues serine 118 to aspartate 121 form a G4 region. The tract at residues valine 147 to asparagine 149 is G5. Residues leucine 199–asparagine 275 enclose the KH type-2 domain.

It belongs to the TRAFAC class TrmE-Era-EngA-EngB-Septin-like GTPase superfamily. Era GTPase family. Monomer.

The protein localises to the cytoplasm. It localises to the cell membrane. Its function is as follows. An essential GTPase that binds both GDP and GTP, with rapid nucleotide exchange. Plays a role in 16S rRNA processing and 30S ribosomal subunit biogenesis and possibly also in cell cycle regulation and energy metabolism. The protein is GTPase Era of Mycoplasmopsis agalactiae (strain NCTC 10123 / CIP 59.7 / PG2) (Mycoplasma agalactiae).